A 777-amino-acid polypeptide reads, in one-letter code: Hepatocyte growth factor-regulated tyrosine kinase substrate (777 aa).

Residues Ala-15–Pro-143 enclose the VHS domain. The FYVE-type zinc finger occupies Trp-160–Asn-220. Zn(2+) is bound by residues Cys-166, Cys-169, Cys-182, Cys-185, Cys-190, and Cys-193. The residue at position 207 (Lys-207) is an N6-acetyllysine. Zn(2+) is bound by residues Cys-212 and Cys-215. Tyr-216 carries the post-translational modification Phosphotyrosine. Residues Ala-223–Ala-319 are disordered. Residues Gly-225–Arg-543 are interaction with SNX1. In terms of domain architecture, UIM spans Gln-258 to Lys-277. The span at Pro-290–Pro-311 shows a compositional bias: low complexity. Phosphotyrosine occurs at positions 308, 329, and 334. Residues Lys-338–Gln-407 form a disordered region. The segment at Ser-445–Arg-543 is interaction with SNAP25 and TRAK2. The interval Leu-454–Ala-572 is interaction with STAM. Residues Ala-480–Asp-777 are interaction with NF2. Lys-551 is subject to N6-succinyllysine. A disordered region spans residues Leu-718–Asp-777. Over residues Pro-753–Gly-768 the composition is skewed to low complexity.

As to quaternary structure, component of the ESCRT-0 complex composed of STAM or STAM2 and HGS. Part of a complex at least composed of HSG, STAM2 (or probably STAM) and EPS15. Interacts with STAM. Interacts with STAM2. Interacts with EPS15; the interaction is direct, calcium-dependent and inhibited by SNAP25. Identified in a complex with STAM and LITAF. Found in a complex with STAM and E3 ligase ITCH and DTX3L. Interacts with E3 ligase DTX3L; the interaction brings together STAM and HSG, promotes their recruitment to early endosomes and decreases STAM and HGS ubiquitination by ITCH. Interacts with NF2; the interaction is direct. Interacts with ubiquitin; the interaction is direct. Interacts with VPS37C. Interacts with SMAD1, SMAD2 and SMAD3. Interacts with TSG101; the interaction mediates the association with the ESCRT-I complex. Interacts with SNAP25; the interaction is direct and decreases with addition of increasing concentrations of free calcium. Interacts with SNX1; the interaction is direct. Component of a 550 kDa membrane complex at least composed of HGS and SNX1 but excluding EGFR. Interacts with TRAK1. Interacts with TRAK2. Component of the CART complex, at least composed of ACTN4, HGS/HRS, MYO5B and TRIM3. Interacts (via UIM domain) with UBQLN1 (via ubiquitin-like domain). Interacts with ARRDC3. Identified in a complex containing at least ARRDC4, AVPR2 and HGS. Interacts with LAPTM4B; promotes HGS ubiquitination. Phosphorylated on Tyr-334. A minor site of phosphorylation on Tyr-329 is detected. Phosphorylation occurs in response to EGF, IL-2, GM-CSF and HGF. Post-translationally, ubiquitinated. Ubiquitinated by ITCH. In terms of tissue distribution, ubiquitous expression in adult and fetal tissues with higher expression in testis and peripheral blood leukocytes.

The protein localises to the cytoplasm. It localises to the early endosome membrane. Its subcellular location is the endosome. The protein resides in the multivesicular body membrane. Functionally, involved in intracellular signal transduction mediated by cytokines and growth factors. When associated with STAM, it suppresses DNA signaling upon stimulation by IL-2 and GM-CSF. Could be a direct effector of PI3-kinase in vesicular pathway via early endosomes and may regulate trafficking to early and late endosomes by recruiting clathrin. May concentrate ubiquitinated receptors within clathrin-coated regions. Involved in down-regulation of receptor tyrosine kinase via multivesicular body (MVBs) when complexed with STAM (ESCRT-0 complex). The ESCRT-0 complex binds ubiquitin and acts as a sorting machinery that recognizes ubiquitinated receptors and transfers them to further sequential lysosomal sorting/trafficking processes. May contribute to the efficient recruitment of SMADs to the activin receptor complex. Involved in receptor recycling via its association with the CART complex, a multiprotein complex required for efficient transferrin receptor recycling but not for EGFR degradation. The polypeptide is Hepatocyte growth factor-regulated tyrosine kinase substrate (HGS) (Homo sapiens (Human)).